The sequence spans 470 residues: Aspartyl aminopeptidase (470 aa).

Residue H92 coordinates Zn(2+). Position 166 (H166) interacts with substrate. D263 provides a ligand contact to Zn(2+). E299 lines the substrate pocket. Zn(2+) contacts are provided by E300 and D343. Substrate-binding residues include D343, H346, K371, and Y378. H437 is a binding site for Zn(2+).

Belongs to the peptidase M18 family. Tetrahedron-shaped homododecamer built from six homodimers. It depends on Zn(2+) as a cofactor. In terms of tissue distribution, expressed in various cell types and tissues including the pharynx, neurons, body wall muscle, intestine and vulva.

The protein resides in the cytoplasm. Its subcellular location is the cytosol. It carries out the reaction Release of an N-terminal aspartate or glutamate from a peptide, with a preference for aspartate.. Its function is as follows. Aminopeptidase with specificity towards an acidic amino acid at the N-terminus. Plays a role in membrane trafficking and is specifically involved in the recycling and degradation of endocytic cargo. The protein is Aspartyl aminopeptidase of Caenorhabditis elegans.